Consider the following 604-residue polypeptide: Crossover junction endonuclease MUS81 (604 aa).

Residues Ser268–Arg290 form a disordered region. Positions Glu322–Ser419 constitute an ERCC4 domain.

Belongs to the XPF family. Interacts with EME1. It depends on Mg(2+) as a cofactor.

Its subcellular location is the nucleus. In terms of biological role, interacts with EME1 to form a DNA structure-specific endonuclease with substrate preference for branched DNA structures with a 5'-end at the branch nick. Typical substrates include 3'-flap structures, D-loops, replication forks and nicked Holliday junctions. May be required in mitosis for the processing of stalled or collapsed replication fork intermediates. May be required in meiosis for the repair of meiosis-specific double strand breaks subsequent to single-end invasion (SEI). This chain is Crossover junction endonuclease MUS81 (MUS81), found in Eremothecium gossypii (strain ATCC 10895 / CBS 109.51 / FGSC 9923 / NRRL Y-1056) (Yeast).